The following is a 457-amino-acid chain: Adenylosuccinate synthetase (457 aa).

GTP-binding positions include 40–46 (GDEGKGK) and 70–72 (GHT). The active-site Proton acceptor is Asp-41. Mg(2+) is bound by residues Asp-41 and Gly-70. Residues 41-44 (DEGK), 68-71 (NAGH), Thr-161, Arg-175, Asn-255, Thr-270, and Arg-334 contribute to the IMP site. His-71 acts as the Proton donor in catalysis. 330-336 (VTTGRKR) contributes to the substrate binding site. GTP is bound by residues Arg-336, 362–364 (KLD), and 444–446 (GVG).

This sequence belongs to the adenylosuccinate synthetase family. As to quaternary structure, homodimer. Mg(2+) is required as a cofactor.

The protein resides in the cytoplasm. The catalysed reaction is IMP + L-aspartate + GTP = N(6)-(1,2-dicarboxyethyl)-AMP + GDP + phosphate + 2 H(+). Its pathway is purine metabolism; AMP biosynthesis via de novo pathway; AMP from IMP: step 1/2. Its function is as follows. Plays an important role in the de novo pathway and in the salvage pathway of purine nucleotide biosynthesis. Catalyzes the first committed step in the biosynthesis of AMP from IMP. The chain is Adenylosuccinate synthetase from Caenorhabditis elegans.